Here is a 776-residue protein sequence, read N- to C-terminus: Isoamylase (776 aa).

Positions 1–26 are cleaved as a signal peptide; it reads MKCPKILAALLGCAVLAGVPAMPAHA. The Ca(2+) site is built by Asp154, Glu255, Thr256, Asn258, and Asp285. The active-site Nucleophile is the Asp401. The cysteines at positions 410 and 422 are disulfide-linked. The active-site Proton donor is Glu461. Cystine bridges form between Cys546/Cys616 and Cys738/Cys766.

This sequence belongs to the glycosyl hydrolase 13 family. Monomer. The cofactor is Ca(2+).

It carries out the reaction Hydrolysis of (1-&gt;6)-alpha-D-glucosidic branch linkages in glycogen, amylopectin and their beta-limit dextrins.. The polypeptide is Isoamylase (iam) (Pseudomonas sp. (strain SMP1)).